Consider the following 1522-residue polypeptide: Dicer-like protein 1 (1522 aa).

Positions 1–12 (MTWAGDVEEQDD) are enriched in acidic residues. A disordered region spans residues 1–37 (MTWAGDVEEQDDYFSCSDVSTSGDRRKRAPQTVTQEE). The Helicase ATP-binding domain maps to 76–258 (LFLRAKMQNT…EHVREAAREL (183 aa)). 89–96 (LDTGTGKT) serves as a coordination point for ATP. The DEAH box motif lies at 202-205 (DEAH). One can recognise a Helicase C-terminal domain in the interval 408–576 (WLNLYYERTT…DVEQEKAELI (169 aa)). Residues 600 to 700 (SLSILSHFVA…LPTISKYLPA (101 aa)) form the Dicer dsRNA-binding fold domain. The PAZ domain maps to 859-980 (PFWKWSPQSR…ICPEPLHISN (122 aa)). 2 consecutive RNase III domains span residues 995–1166 (IIHR…MQHH) and 1222–1373 (AHKI…VDSE). Mg(2+) is bound by residues E1262, D1359, and E1362. The DRBM domain occupies 1409–1478 (TRLSRLLSIN…SHAALEKLEG (70 aa)). Zn(2+) is bound by residues C1421, H1449, C1490, and C1492.

It belongs to the helicase family. Dicer subfamily. Requires Mg(2+) as cofactor. Mn(2+) is required as a cofactor.

Dicer-like endonuclease involved in cleaving double-stranded RNA in the RNA interference (RNAi) pathway. Produces 21 to 25 bp dsRNAs (siRNAs) which target the selective destruction of homologous RNAs leading to sequence-specific suppression of gene expression, called post-transcriptional gene silencing (PTGS). Part of a broad host defense response against viral infection and transposons. This chain is Dicer-like protein 1 (DCL1), found in Phaeosphaeria nodorum (strain SN15 / ATCC MYA-4574 / FGSC 10173) (Glume blotch fungus).